The following is a 329-amino-acid chain: CDP-6-deoxy-L-threo-D-glycero-4-hexulose-3-dehydrase reductase (329 aa).

The 92-residue stretch at 2 to 93 (SLNVKLHPSG…ELDVNYYPEL (92 aa)) folds into the 2Fe-2S ferredoxin-type domain. [2Fe-2S] cluster-binding residues include Cys-37, Cys-42, Cys-45, and Cys-75. Positions 98 to 197 (KKTYPCKLDS…EGPQGTFFVR (100 aa)) constitute an FAD-binding FR-type domain.

As to quaternary structure, monomer.

Its pathway is nucleotide-sugar biosynthesis; CDP-ascarylose biosynthesis. The protein operates within bacterial outer membrane biogenesis; lipopolysaccharide biosynthesis. Participates in the conversion of CDP-6-deoxy-D-glycero-L-threo-4-hexulose to 3,6-dideoxy-D-glycero-D-glycero-4-hexulose together with CDP-6-deoxy-D-glycero-L-threo-4-hexulose-3-dehydrase (E1) in two consecutive steps. The detailed mechanism of E3 is not yet resolved. The protein is CDP-6-deoxy-L-threo-D-glycero-4-hexulose-3-dehydrase reductase (ascD) of Yersinia pseudotuberculosis serotype I (strain IP32953).